A 46-amino-acid chain; its full sequence is Endochitinase 2 (46 aa).

It belongs to the glycosyl hydrolase 19 family. Chitinase class I subfamily.

The catalysed reaction is Random endo-hydrolysis of N-acetyl-beta-D-glucosaminide (1-&gt;4)-beta-linkages in chitin and chitodextrins.. Defense against chitin-containing fungal and bacterial pathogens. In Arachis hypogaea (Peanut), this protein is Endochitinase 2.